The chain runs to 142 residues: Nitrogen fixation protein NifU 2 (142 aa).

Positions 1–36 are disordered; that stretch reads MKDLFDESLTLDTGSAAPGTAPGRPRRRQPAGGKAP. A compositionally biased stretch (low complexity) spans 14-23; the sequence is GSAAPGTAPG.

This sequence belongs to the NifU family.

In terms of biological role, may be involved in the formation or repair of [Fe-S] clusters present in iron-sulfur proteins. This is Nitrogen fixation protein NifU 2 (nifU2) from Rhodobacter capsulatus (Rhodopseudomonas capsulata).